A 779-amino-acid chain; its full sequence is Phosphoribosylformylglycinamidine synthase subunit PurL (779 aa).

The active site involves His52. ATP-binding residues include Tyr55 and Lys94. Residue Glu96 participates in Mg(2+) binding. Substrate-binding positions include 97-100 (SHNH) and Arg119. The Proton acceptor role is filled by His98. Residue Asp120 participates in Mg(2+) binding. Substrate is bound at residue Gln243. Asp271 serves as a coordination point for Mg(2+). Substrate is bound at residue 315 to 317 (ESQ). Residues Asn523 and Gly560 each contribute to the ATP site. Residue Asn561 coordinates Mg(2+). Substrate is bound at residue Ser563.

This sequence belongs to the FGAMS family. In terms of assembly, monomer. Part of the FGAM synthase complex composed of 1 PurL, 1 PurQ and 2 PurS subunits.

The protein localises to the cytoplasm. The enzyme catalyses N(2)-formyl-N(1)-(5-phospho-beta-D-ribosyl)glycinamide + L-glutamine + ATP + H2O = 2-formamido-N(1)-(5-O-phospho-beta-D-ribosyl)acetamidine + L-glutamate + ADP + phosphate + H(+). It functions in the pathway purine metabolism; IMP biosynthesis via de novo pathway; 5-amino-1-(5-phospho-D-ribosyl)imidazole from N(2)-formyl-N(1)-(5-phospho-D-ribosyl)glycinamide: step 1/2. Part of the phosphoribosylformylglycinamidine synthase complex involved in the purines biosynthetic pathway. Catalyzes the ATP-dependent conversion of formylglycinamide ribonucleotide (FGAR) and glutamine to yield formylglycinamidine ribonucleotide (FGAM) and glutamate. The FGAM synthase complex is composed of three subunits. PurQ produces an ammonia molecule by converting glutamine to glutamate. PurL transfers the ammonia molecule to FGAR to form FGAM in an ATP-dependent manner. PurS interacts with PurQ and PurL and is thought to assist in the transfer of the ammonia molecule from PurQ to PurL. In Prochlorococcus marinus (strain MIT 9312), this protein is Phosphoribosylformylglycinamidine synthase subunit PurL.